The chain runs to 784 residues: MMKNLNGRAHNVCYQPYYQQQLQHQQLHQQQHQQQQQQQQQQQHLQQQQLQLQLPYAAQYNQLQQQQLQYNQQQYYQQQLQQQQQQQQQQQLLRQQQPTQSAYQQQNAKQSYGHNNNNNSNNNANMARSNMHATTVAAVNANGNSHANAANANTATAAMAAMCQMQSFLSQQQQQQRQQQQQQQQQYSNNSAHINYNQQQQQSQQQQQSQQQQQSQQQQQSQQQQQQHLPTVATTNGDKLTLDSANEIANFLANELFMQQLVTFDGMQSAPTLTTPTLTPTTLRTIEDTIYELTTDSHVPFQAGFKPPPLTSLGNITNNNTITSTTAGGATLPGINANLINTNPQFDLIALNCAGSVPGSDTEESNGSWNEGQLNDDQSTTDTSSAATDSTSYQNGGHMMGNGSNGGVNNFAAALSGVNTSGRGSGLAANSTTSNSATPARRGGGRRPNKAANMSPEEEEKRRIRRERNKLAAARCRKRRVDQTNELTEEVDALMKKSEDLKKEIESLTATKSQLEYVLQTHSSTCQKVRDDLLTVATCNGLIGPTTLLNACNTSSVSLHNSNNSNNNSNSNDSSNGTITGFDATLNSTGRSNSPLDLKPVLIDEQLLQHIKHEPQDGAIDSGSSLDQDGPTPAKRFALPNIATFNASLQTPTGPAAGAALNTPISSTAPSSFAHFSSAISSPTLNAHALNKLPKPRPNTLNVNAQRPFGVAAAAGDGKAPPTQIQGVPIQTPSTGTFNFDSLMDGGTGLTPVSGPLMPTCSSQNKHPLELPTPTSEPSKLVSL.

Low complexity-rich tracts occupy residues 97–106, 115–126, and 198–227; these read QPTQSAYQQQ, NNNNNSNNNANM, and QQQQ…QQQQ. Disordered stretches follow at residues 97–126, 196–231, 358–404, and 421–464; these read QPTQ…NANM, YNQQ…HLPT, PGSD…GNGS, and SGRG…KRRI. Residues 365-378 show a composition bias toward polar residues; that stretch reads SNGSWNEGQLNDDQ. The segment covering 380–397 has biased composition (low complexity); sequence TTDTSSAATDSTSYQNGG. Polar residues predominate over residues 421-438; the sequence is SGRGSGLAANSTTSNSAT. The bZIP domain maps to 459 to 522; it reads EEKRRIRRER…SQLEYVLQTH (64 aa). Residues 461 to 463 are basic motif; it reads KRR. The interval 464–471 is leucine-zipper; the sequence is IRRERNKL. Ser-594 carries the phosphoserine modification. Disordered regions lie at residues 616-635 and 759-784; these read QDGA…TPAK and PTCS…LVSL.

This sequence belongs to the bZIP family. Fos subfamily. In terms of assembly, homodimer. Heterodimer with Jra. The kay-Jra heterodimer binds more stably to the AP-1 site than either of the two proteins alone.

The protein resides in the nucleus. Developmentally regulated transcription factor AP-1 binds and recognizes the enhancer DNA sequence: 5'-TGA[CG]TCA-3'. May play a role in the function or determination of a particular subset of cells in the developing embryo. It is able to carry out its function either independently of or in conjunction with Jra. The sequence is that of Transcription factor kayak from Drosophila mojavensis (Fruit fly).